The sequence spans 352 residues: Lipase chaperone (352 aa).

Residues 7–28 form a helical membrane-spanning segment; the sequence is LSLVAVVVAGGLTLYWRWPAAV.

The protein belongs to the lipase chaperone family.

It localises to the cell inner membrane. May be involved in the folding of the extracellular lipase during its passage through the periplasm. In Pseudomonas wisconsinensis, this protein is Lipase chaperone (lifO).